A 159-amino-acid chain; its full sequence is Cytochrome c-type biogenesis protein CcmE (159 aa).

Residues 1 to 8 (MNPRRKTR) are Cytoplasmic-facing. A helical; Signal-anchor for type II membrane protein transmembrane segment spans residues 9-29 (LWVALTVLAGLGLTMALVLYA). Residues 30-159 (LRANIDLFYT…PPQAYKDNRP (130 aa)) lie on the Periplasmic side of the membrane. His-130 and Tyr-134 together coordinate heme. The segment at 130–159 (HDENYTPPEVKAAMDANHTRPPQAYKDNRP) is disordered.

This sequence belongs to the CcmE/CycJ family.

The protein localises to the cell inner membrane. In terms of biological role, heme chaperone required for the biogenesis of c-type cytochromes. Transiently binds heme delivered by CcmC and transfers the heme to apo-cytochromes in a process facilitated by CcmF and CcmH. This Cronobacter sakazakii (strain ATCC BAA-894) (Enterobacter sakazakii) protein is Cytochrome c-type biogenesis protein CcmE.